The primary structure comprises 213 residues: GTP cyclohydrolase 1 (213 aa).

Cys104, His107, and Cys175 together coordinate Zn(2+).

This sequence belongs to the GTP cyclohydrolase I family. As to quaternary structure, homomer.

The catalysed reaction is GTP + H2O = 7,8-dihydroneopterin 3'-triphosphate + formate + H(+). The protein operates within cofactor biosynthesis; 7,8-dihydroneopterin triphosphate biosynthesis; 7,8-dihydroneopterin triphosphate from GTP: step 1/1. In Brucella suis (strain ATCC 23445 / NCTC 10510), this protein is GTP cyclohydrolase 1.